We begin with the raw amino-acid sequence, 133 residues long: Small ribosomal subunit protein uS8 (133 aa).

Belongs to the universal ribosomal protein uS8 family. Part of the 30S ribosomal subunit. Contacts proteins S5 and S12.

In terms of biological role, one of the primary rRNA binding proteins, it binds directly to 16S rRNA central domain where it helps coordinate assembly of the platform of the 30S subunit. This chain is Small ribosomal subunit protein uS8, found in Leptospira borgpetersenii serovar Hardjo-bovis (strain JB197).